The following is a 170-amino-acid chain: Large ribosomal subunit protein uL10 (170 aa).

This sequence belongs to the universal ribosomal protein uL10 family. As to quaternary structure, part of the ribosomal stalk of the 50S ribosomal subunit. The N-terminus interacts with L11 and the large rRNA to form the base of the stalk. The C-terminus forms an elongated spine to which L12 dimers bind in a sequential fashion forming a multimeric L10(L12)X complex.

Forms part of the ribosomal stalk, playing a central role in the interaction of the ribosome with GTP-bound translation factors. In Corynebacterium urealyticum (strain ATCC 43042 / DSM 7109), this protein is Large ribosomal subunit protein uL10.